We begin with the raw amino-acid sequence, 280 residues long: Fructose-1,6-bisphosphatase class 1 (280 aa).

The Mg(2+) site is built by E64, D83, L85, and D86. Substrate-binding positions include 86–89 (DGSS), Y189, and K220. E226 contributes to the Mg(2+) binding site.

The protein belongs to the FBPase class 1 family. In terms of assembly, homotetramer. Mg(2+) is required as a cofactor.

It is found in the cytoplasm. It catalyses the reaction beta-D-fructose 1,6-bisphosphate + H2O = beta-D-fructose 6-phosphate + phosphate. It participates in carbohydrate biosynthesis; gluconeogenesis. The sequence is that of Fructose-1,6-bisphosphatase class 1 from Campylobacter jejuni subsp. jejuni serotype O:2 (strain ATCC 700819 / NCTC 11168).